The primary structure comprises 122 residues: Large ribosomal subunit protein uL18 (122 aa).

It belongs to the universal ribosomal protein uL18 family. As to quaternary structure, part of the 50S ribosomal subunit; part of the 5S rRNA/L5/L18/L25 subcomplex. Contacts the 5S and 23S rRNAs.

In terms of biological role, this is one of the proteins that bind and probably mediate the attachment of the 5S RNA into the large ribosomal subunit, where it forms part of the central protuberance. This is Large ribosomal subunit protein uL18 from Trichlorobacter lovleyi (strain ATCC BAA-1151 / DSM 17278 / SZ) (Geobacter lovleyi).